Consider the following 357-residue polypeptide: Alanine racemase (357 aa).

Catalysis depends on lysine 35, which acts as the Proton acceptor; specific for D-alanine. At lysine 35 the chain carries N6-(pyridoxal phosphate)lysine. Residue arginine 131 coordinates substrate. Residue tyrosine 256 is the Proton acceptor; specific for L-alanine of the active site. Position 304 (methionine 304) interacts with substrate.

The protein belongs to the alanine racemase family. It depends on pyridoxal 5'-phosphate as a cofactor.

The catalysed reaction is L-alanine = D-alanine. It functions in the pathway amino-acid biosynthesis; D-alanine biosynthesis; D-alanine from L-alanine: step 1/1. Catalyzes the interconversion of L-alanine and D-alanine. May also act on other amino acids. The polypeptide is Alanine racemase (alr) (Legionella pneumophila (strain Paris)).